Here is a 156-residue protein sequence, read N- to C-terminus: MNINATLLGQAIAFAVFVWFCMKYVWPPLLAAIEDRQKKISDGLTQAERAGKDLELAQAKASEKLKEAKVQAAEIIEQANKRRNQIVEAAKTEAETERQKIIAQGEAEVEVDRNRVREELRLKVSALAIAGAEKIIKRSIDKEANSDIIDKLVAEL.

A helical transmembrane segment spans residues 11–31 (AIAFAVFVWFCMKYVWPPLLA).

The protein belongs to the ATPase B chain family. In terms of assembly, F-type ATPases have 2 components, F(1) - the catalytic core - and F(0) - the membrane proton channel. F(1) has five subunits: alpha(3), beta(3), gamma(1), delta(1), epsilon(1). F(0) has three main subunits: a(1), b(2) and c(10-14). The alpha and beta chains form an alternating ring which encloses part of the gamma chain. F(1) is attached to F(0) by a central stalk formed by the gamma and epsilon chains, while a peripheral stalk is formed by the delta and b chains.

The protein localises to the cell inner membrane. F(1)F(0) ATP synthase produces ATP from ADP in the presence of a proton or sodium gradient. F-type ATPases consist of two structural domains, F(1) containing the extramembraneous catalytic core and F(0) containing the membrane proton channel, linked together by a central stalk and a peripheral stalk. During catalysis, ATP synthesis in the catalytic domain of F(1) is coupled via a rotary mechanism of the central stalk subunits to proton translocation. Its function is as follows. Component of the F(0) channel, it forms part of the peripheral stalk, linking F(1) to F(0). This Psychromonas ingrahamii (strain DSM 17664 / CCUG 51855 / 37) protein is ATP synthase subunit b.